Here is a 471-residue protein sequence, read N- to C-terminus: Tryptophanase (471 aa).

Position 256 is an N6-(pyridoxal phosphate)lysine (Lys256).

It belongs to the beta-eliminating lyase family. Homotetramer. Requires pyridoxal 5'-phosphate as cofactor.

It catalyses the reaction L-tryptophan + H2O = indole + pyruvate + NH4(+). It participates in amino-acid degradation; L-tryptophan degradation via pyruvate pathway; indole and pyruvate from L-tryptophan: step 1/1. The sequence is that of Tryptophanase from Salinibacter ruber (strain DSM 13855 / M31).